The following is a 546-amino-acid chain: 2-succinyl-5-enolpyruvyl-6-hydroxy-3-cyclohexene-1-carboxylate synthase (546 aa).

The protein belongs to the TPP enzyme family. MenD subfamily. As to quaternary structure, homodimer. It depends on Mg(2+) as a cofactor. Mn(2+) is required as a cofactor. Thiamine diphosphate serves as cofactor.

The enzyme catalyses isochorismate + 2-oxoglutarate + H(+) = 5-enolpyruvoyl-6-hydroxy-2-succinyl-cyclohex-3-ene-1-carboxylate + CO2. Its pathway is quinol/quinone metabolism; 1,4-dihydroxy-2-naphthoate biosynthesis; 1,4-dihydroxy-2-naphthoate from chorismate: step 2/7. The protein operates within quinol/quinone metabolism; menaquinone biosynthesis. Its function is as follows. Catalyzes the thiamine diphosphate-dependent decarboxylation of 2-oxoglutarate and the subsequent addition of the resulting succinic semialdehyde-thiamine pyrophosphate anion to isochorismate to yield 2-succinyl-5-enolpyruvyl-6-hydroxy-3-cyclohexene-1-carboxylate (SEPHCHC). This Mycolicibacterium smegmatis (strain ATCC 700084 / mc(2)155) (Mycobacterium smegmatis) protein is 2-succinyl-5-enolpyruvyl-6-hydroxy-3-cyclohexene-1-carboxylate synthase.